The primary structure comprises 101 residues: Biogenesis of lysosome-related organelles complex 1 subunit BLS1 (101 aa).

This sequence belongs to the BLOC1S1 family. In terms of assembly, component of the biogenesis of lysosome-related organelles complex-1 (BLOC-1).

It is found in the endosome. Component of the biogenesis of lysosome-related organelles complex-1 (BLOC-1), a complex involved in endosomal cargo sorting. The protein is Biogenesis of lysosome-related organelles complex 1 subunit BLS1 (BLS1) of Zygosaccharomyces rouxii (strain ATCC 2623 / CBS 732 / NBRC 1130 / NCYC 568 / NRRL Y-229).